Here is a 133-residue protein sequence, read N- to C-terminus: Putative dispanin subfamily A member 2d (133 aa).

Residues 1-57 lie on the Extracellular side of the membrane; sequence MNHTVQTFFSPVNSGQPPNYEMLKEEHKVAVLGVPHNPAPPTSTVIHIRSKTSVPHH. A Glycyl lysine isopeptide (Lys-Gly) (interchain with G-Cter in ubiquitin) cross-link involves residue K24. The chain crosses the membrane as a helical span at residues 58–78; sequence VVWSLFNTLFMNPCCLGFIAF. The Cytoplasmic segment spans residues 79 to 107; that stretch reads AYSVKSRDRKMVGNVTGAQAYASTTKCLN. Residues K83, K88, and K104 each participate in a glycyl lysine isopeptide (Lys-Gly) (interchain with G-Cter in ubiquitin) cross-link. The chain crosses the membrane as a helical span at residues 108–128; the sequence is IWALILGILMTILLIIIPVLI. Over 129–133 the chain is Extracellular; sequence FQAHR.

The protein belongs to the CD225/Dispanin family.

The protein localises to the membrane. This chain is Putative dispanin subfamily A member 2d, found in Homo sapiens (Human).